The primary structure comprises 262 residues: Pyridoxine 5'-phosphate synthase (262 aa).

3-amino-2-oxopropyl phosphate is bound at residue Asn-6. 8-9 (DH) serves as a coordination point for 1-deoxy-D-xylulose 5-phosphate. 3-amino-2-oxopropyl phosphate is bound at residue Arg-17. Residue His-43 is the Proton acceptor of the active site. Positions 45 and 50 each coordinate 1-deoxy-D-xylulose 5-phosphate. Glu-70 serves as the catalytic Proton acceptor. Thr-102 lines the 1-deoxy-D-xylulose 5-phosphate pocket. His-215 functions as the Proton donor in the catalytic mechanism. Residues Gly-216 and 237 to 238 (GH) each bind 3-amino-2-oxopropyl phosphate.

It belongs to the PNP synthase family. Homooctamer; tetramer of dimers.

It localises to the cytoplasm. The enzyme catalyses 3-amino-2-oxopropyl phosphate + 1-deoxy-D-xylulose 5-phosphate = pyridoxine 5'-phosphate + phosphate + 2 H2O + H(+). It participates in cofactor biosynthesis; pyridoxine 5'-phosphate biosynthesis; pyridoxine 5'-phosphate from D-erythrose 4-phosphate: step 5/5. Functionally, catalyzes the complicated ring closure reaction between the two acyclic compounds 1-deoxy-D-xylulose-5-phosphate (DXP) and 3-amino-2-oxopropyl phosphate (1-amino-acetone-3-phosphate or AAP) to form pyridoxine 5'-phosphate (PNP) and inorganic phosphate. This chain is Pyridoxine 5'-phosphate synthase, found in Helicobacter pylori (strain P12).